Here is a 332-residue protein sequence, read N- to C-terminus: DNA-directed RNA polymerase subunit alpha (332 aa).

Residues 1–227 (MKKFAETPFL…VMYSQMSVFN (227 aa)) form an alpha N-terminal domain (alpha-NTD) region. Positions 248-332 (KELVIRIDDL…LRRKLEQLKA (85 aa)) are alpha C-terminal domain (alpha-CTD).

The protein belongs to the RNA polymerase alpha chain family. Homodimer. The RNAP catalytic core consists of 2 alpha, 1 beta, 1 beta' and 1 omega subunit. When a sigma factor is associated with the core the holoenzyme is formed, which can initiate transcription.

The catalysed reaction is RNA(n) + a ribonucleoside 5'-triphosphate = RNA(n+1) + diphosphate. In terms of biological role, DNA-dependent RNA polymerase catalyzes the transcription of DNA into RNA using the four ribonucleoside triphosphates as substrates. This is DNA-directed RNA polymerase subunit alpha from Aliarcobacter butzleri (strain RM4018) (Arcobacter butzleri).